A 349-amino-acid polypeptide reads, in one-letter code: Phosphate acyltransferase (349 aa).

This sequence belongs to the PlsX family. As to quaternary structure, homodimer. Probably interacts with PlsY.

It localises to the cytoplasm. The catalysed reaction is a fatty acyl-[ACP] + phosphate = an acyl phosphate + holo-[ACP]. Its pathway is lipid metabolism; phospholipid metabolism. In terms of biological role, catalyzes the reversible formation of acyl-phosphate (acyl-PO(4)) from acyl-[acyl-carrier-protein] (acyl-ACP). This enzyme utilizes acyl-ACP as fatty acyl donor, but not acyl-CoA. In Akkermansia muciniphila (strain ATCC BAA-835 / DSM 22959 / JCM 33894 / BCRC 81048 / CCUG 64013 / CIP 107961 / Muc), this protein is Phosphate acyltransferase.